A 354-amino-acid chain; its full sequence is Malate dehydrogenase 1, peroxisomal (354 aa).

The interval Arg-6–Leu-14 is peroxisomal targeting signal PTS2. NAD(+) contacts are provided by residues Gly-49 to Gly-55 and Asp-75. Substrate-binding residues include Arg-122 and Arg-128. NAD(+) contacts are provided by residues Asn-135 and Ile-158 to Asn-160. Residues Asn-160 and Arg-194 each coordinate substrate. The Proton acceptor role is filled by His-218. Position 269 (Met-269) interacts with NAD(+).

It belongs to the LDH/MDH superfamily. MDH type 1 family. Homodimer. In terms of tissue distribution, expressed in rosette leaves at low levels.

The protein localises to the peroxisome. The catalysed reaction is (S)-malate + NAD(+) = oxaloacetate + NADH + H(+). Catalyzes a reversible NAD-dependent dehydrogenase reaction involved in central metabolism and redox homeostasis between organelle compartments. Peroxisomal NAD-dependent malate dehydrogenase involved in fatty acid beta-oxidation. Reoxidizes NADH from the beta-oxidation and provides NAD for the conversion of fatty acyl-CoA to acetyl-CoA. Does not participate directly in the glyoxylate cycle. Required for maintenance of photosynthetic rates under photorespiratory conditions, and carbon flow during photorespiration. Supplies NADH reductant to the peroxisomal hydroxypyruvate reductase (HPR), which reduces hydroxypyruvate into glycerate in the photorespiratory cycle. In Arabidopsis thaliana (Mouse-ear cress), this protein is Malate dehydrogenase 1, peroxisomal.